The sequence spans 349 residues: Glycerol-3-phosphate dehydrogenase [NAD(+)], cytoplasmic (349 aa).

An NAD(+)-binding site is contributed by 10–15 (GSGNWG). Lys-120 contacts substrate. Residue Ala-153 participates in NAD(+) binding. Ser-154 carries the phosphoserine modification. Lys-204 (proton acceptor) is an active-site residue. Arg-269 lines the NAD(+) pocket. 269–270 (RN) is a substrate binding site. Lys-289 is subject to N6-succinyllysine. NAD(+) is bound by residues Lys-296 and Gln-298. Tyr-326 carries the phosphotyrosine modification.

The protein belongs to the NAD-dependent glycerol-3-phosphate dehydrogenase family. In terms of assembly, homodimer.

It is found in the cytoplasm. The enzyme catalyses sn-glycerol 3-phosphate + NAD(+) = dihydroxyacetone phosphate + NADH + H(+). Has glycerol-3-phosphate dehydrogenase activity. This Pongo abelii (Sumatran orangutan) protein is Glycerol-3-phosphate dehydrogenase [NAD(+)], cytoplasmic (GPD1).